The following is a 2151-amino-acid chain: MLLQRRSWLWLYIRIGVILGDILGRKPSIREQHGGNSCYQLNRLFCDFQEADNYCHAQRGRLAHTWNPKLRGFLKSFLNEETVWWVRGNLTLPGSHPGINQTGGDDVLRNQKPGECPSVVTHSNAVFSRWNLCIEKHHFICQAAAFPPQGASIWRNEFGPGPLLPMKRRGAETERHMIPGNGPPLAMCHQPAPPELFETLCFPIDPASSAPPKATHRMTITSLTGRPQVTSDTLASSSPPQGTSDTPASSSPPQVTSATSASSSPPQGTSDTPASSSPPQVTSATSASSSPPQGTSDTPASSSPPQVTSATSASSSPPQGTSDTPASSSPPQVTSATSASSSPPQGTSDTPASSSPPQGTLDTPSSSSPPQGTSDTPASSSPPQGTSETPASNSPPQGTSETPGFSSPPQVTTATLVSSSPPQVTSETPASSSPTQVTSETPASSSPTQVTSDTPASNSPPQGTSDTPGFSSPTQVTTATLVSSSPPQVTSDTPASSSPPQVTSDTPASSSPPQVTSETPASSSPPQVTSDTSASISPPQVISDTPASSSPPQVTSETPASSSPTNMTSDTPASSSPTNMTSDTPASSSPTNMTSDTPASSSPPWPVITEVTRPESTIPAGRSLANITSKAQEDSPLGVISTHPQMSFQSSTSQALDETAGERVPTIPDFQAHSEFQKACAILQRLRDFLPTSPTSAQVSVANLLIDLSEQLLVLPFQKNNSWSSQTPAVSCPFQPLGRLTTTEKSSHQMAQQDMEQVEDMLETSLMALGEIHRAFCQQSLCPQSAVTLASPSATLMLSSQNVSTLPLSTYTLGEPAPLTLGFPSAEALKELLNKHPGVNLQVTGLAFNPFKTLDDKNIVGSIGNVQLSSAYQSIRVHDLIEDIEIMLWRNASMETQPTSLNTSTDHFTISVNITSLEKTLIVTIEPESPLLMTLHLGFQDQLAHTHFYLNISLPRDQVWQKDEEYTWVLTPENLWYGTGTYYIMAVENKSTEAAQHTPVLVSVVTAVTQCYFWDRYNRTWKSDGCQVGPKSTILKTQCLCDHLTFFSSDFFIVPRTVDVENTIKLLLHVTNNPVGVSLLSSLLGFYILLAMWASRKDREDMQKVKVTVLADNDPSSASHYLIQVYTGYRRRAATTAKVVITLYGSEGHSEPHHLCDPEKTVFERGALDVFLLSTGSWLGDLHGLRLWHDNSGDSPSWYVSQVIVSDMTTRKKWHFQCNCWLAVDLGNCERDRVFTPASRSELSSFRHLFSSTIVEKFTQDYLWLSVATRHPWNQFTRVQRLSCCMALLLCDMVINIMFWKMGGTTAKRGTEQLGPLAVTLSELLVSIQTSIILFPIHLIFGRLFQLIHPPEALPQLPFIQAAWPPALVCESPSLTQVVKELKETVGFLLRRNTQLLSECEPSSCSSCDINKLAKLLSGLIYCHLEDEGCHQQTESHWEDAVSENHYHFCRYLLQLLRRLKAHLEALGATQDHQSCDFSEAVSQLQNLQELLETQTLRRGPGPCRHSTSFPILSPGEGKKPMSFCLFRWLKCSCWLLLGVISLASAFFITLYSLELDKDQATSWVISMMLSVLQDIFISQPIKVIFLTLLFSLMANHMPWLNKDKEQHARRIVALWAKCPWSAPGLRDKNNPIYTAPAMNNLAKPTRKAWKKQLSKLTGGTLVQILFLTLLMTTVYSAKDSSRFFLHRAIWKRFSHRFSEIKTVEDFYPWANGTLLPNLYGDYRGFITDGNSFLLGNVLIRQTRIPNDIFFPGSLHKQMKSPPQHQEDRENYGAGWVPPDTNITKVDSIWHYQNQESLGGYPIQGELATYSGGGYVVRLGRNHSAATRVLQHLEQRRWLDHCTKALFVEFTVFNANVNLLCAVTLILESSGVGTFLTSLQLDSLTSLQSSERGFAWIVSQVVYYLLVCYYAFIQGCRLKRQRLAFFTRKRNLLDTSIVLISFSILGLSMQSLSLLHKKMQQYHCDRDRFISFYEALRVNSAVTHLRGFLLLFATVRVWDLLRHHAQLQVINKTLSKAWDEVLGFILIIVVLLSSYAMTFNLLFGWSISDYQSFFRSIVTVVGLLMGTSKHKEVIALYPILGSLLVLSSIILMGLVIINLFVSAILIAFGKERKACEKEATLTDMLLQKLSSLLGIRLHQNPSEEHADNTGY.

A signal peptide spans 1 to 20 (MLLQRRSWLWLYIRIGVILG). Residues 25–1073 (RKPSIREQHG…IKLLLHVTNN (1049 aa)) lie on the Extracellular side of the membrane. Residues 34–142 (GGNSCYQLNR…CIEKHHFICQ (109 aa)) form the C-type lectin domain. 2 disulfide bridges follow: cysteine 55/cysteine 141 and cysteine 116/cysteine 133. An N-linked (GlcNAc...) asparagine glycan is attached at asparagine 89. Residues 222 to 245 (SLTGRPQVTSDTLASSSPPQGTSD) are compositionally biased toward polar residues. Positions 222–609 (SLTGRPQVTS…SSSPPWPVIT (388 aa)) are disordered. The segment covering 246–348 (TPASSSPPQV…ASSSPPQGTS (103 aa)) has biased composition (low complexity). 2 stretches are compositionally biased toward polar residues: residues 349–363 (DTPASSSPPQGTLDT) and 371–600 (QGTS…TPAS). N-linked (GlcNAc...) asparagine glycans are attached at residues asparagine 566, asparagine 579, asparagine 592, asparagine 913, and asparagine 951. The 163-residue stretch at 899-1061 (TSLNTSTDHF…FIVPRTVDVE (163 aa)) folds into the GAIN-B domain. 2 disulfides stabilise this stretch: cysteine 1011-cysteine 1039 and cysteine 1026-cysteine 1041. The GPS stretch occupies residues 1011 to 1061 (CYFWDRYNRTWKSDGCQVGPKSTILKTQCLCDHLTFFSSDFFIVPRTVDVE). The interval 1045–1061 (TFFSSDFFIVPRTVDVE) is stachel. The chain crosses the membrane as a helical span at residues 1074-1094 (PVGVSLLSSLLGFYILLAMWA). Over 1095–1283 (SRKDREDMQK…NQFTRVQRLS (189 aa)) the chain is Cytoplasmic. A PLAT domain is found at 1119 to 1236 (SHYLIQVYTG…GNCERDRVFT (118 aa)). Residues 1284–1304 (CCMALLLCDMVINIMFWKMGG) form a helical membrane-spanning segment. The Extracellular segment spans residues 1305–1320 (TTAKRGTEQLGPLAVT). A helical membrane pass occupies residues 1321–1341 (LSELLVSIQTSIILFPIHLIF). At 1342–1533 (GRLFQLIHPP…FCLFRWLKCS (192 aa)) the chain is on the cytoplasmic side. Residues 1534-1554 (CWLLLGVISLASAFFITLYSL) traverse the membrane as a helical segment. At 1555–1575 (ELDKDQATSWVISMMLSVLQD) the chain is on the extracellular side. Residues 1576-1596 (IFISQPIKVIFLTLLFSLMAN) form a helical membrane-spanning segment. The Cytoplasmic segment spans residues 1597–1665 (HMPWLNKDKE…KLTGGTLVQI (69 aa)). The helical transmembrane segment at 1666 to 1676 (LFLTLLMTTVY) threads the bilayer. Over 1677 to 1892 (SAKDSSRFFL…SLTSLQSSER (216 aa)) the chain is Extracellular. N-linked (GlcNAc) asparagine glycans are attached at residues asparagine 1712 and asparagine 1822. Residues 1893-1921 (GFAWIVSQVVYYLLVCYYAFIQGCRLKRQ) traverse the membrane as a helical segment. Residues 1922–1930 (RLAFFTRKR) are Cytoplasmic-facing. The chain crosses the membrane as a helical span at residues 1931-1949 (NLLDTSIVLISFSILGLSM). Over 1950-1980 (QSLSLLHKKMQQYHCDRDRFISFYEALRVNS) the chain is Extracellular. Residues 1981-2002 (AVTHLRGFLLLFATVRVWDLLR) traverse the membrane as a helical segment. Residues 2003–2019 (HHAQLQVINKTLSKAWD) are Cytoplasmic-facing. The chain crosses the membrane as a helical span at residues 2020–2044 (EVLGFILIIVVLLSSYAMTFNLLFG). Residues 2043–2081 (FGWSISDYQSFFRSIVTVVGLLMGTSKHKEVIALYPILG) are channel pore-region. At 2045-2077 (WSISDYQSFFRSIVTVVGLLMGTSKHKEVIALY) the chain is on the extracellular side. A helical membrane pass occupies residues 2078 to 2097 (PILGSLLVLSSIILMGLVII). The Cytoplasmic segment spans residues 2098–2151 (NLFVSAILIAFGKERKACEKEATLTDMLLQKLSSLLGIRLHQNPSEEHADNTGY).

This sequence belongs to the polycystin family. In terms of assembly, heterotetramer with PKD2L1, composed of 3 subunit of PKD2L1 and 1 subunit of PKD1L3. Autoproteolytically processed at the GPS region of the GAIN-B domain; this cleavage modulates receptor activity. In terms of tissue distribution, expressed in a subset of taste receptor cells (type III taste cells) distinct from those involved in bitter, sweet and umami taste. Expressed in circumvallate and foliate taste buds, but not in surrounding non-gustatory lingual epithelium cells. Expressed in testis.

It is found in the cell membrane. The catalysed reaction is Ca(2+)(in) = Ca(2+)(out). The enzyme catalyses Na(+)(in) = Na(+)(out). It carries out the reaction K(+)(in) = K(+)(out). It catalyses the reaction Mg(2+)(in) = Mg(2+)(out). Its activity is regulated as follows. The non-selective cation channel is gated following an off-response property by acid: gated open after the removal of acid stimulus, but not during acid application. Non-selective cation channel activity is inhibited by capsaicin. Regulation of non-selective cation channel activity by external Ca(2+) is bimodal, first sensitizing and subsequently inactivating the current. The apo (closed) heterotetramer has an asymmetric selectivity filter (SF) guarded by Lys-2069 in absence of Ca(2+). However, Ca(2+)-entrance to the SF vestibule is accompanied by a swing motion of Lys-2069 on PKD1L3. Its function is as follows. Pore-forming subunit of a heterotetrameric, non-selective cation channel that is permeable to Ca(2+). Also shows permeability towards NA(1+), K(+) and Mg(2+). Heterotetrameric complex channel is activated by external low pH and Ca(2+), but opens only when the extracellular pH rises again and after the removal of acid stimulus. May act as a sour taste receptor in gustatory cells; however, its contribution to sour taste perception is unclear in vivo and may be indirect. In Mus musculus (Mouse), this protein is Polycystin-1-like protein 3.